Here is a 493-residue protein sequence, read N- to C-terminus: Cobyric acid synthase (493 aa).

The GATase cobBQ-type domain occupies 246-440 (PIDIAVIKMP…IHGVFDGVSF (195 aa)). The active-site Nucleophile is the C326. The active site involves H432.

This sequence belongs to the CobB/CobQ family. CobQ subfamily.

Its pathway is cofactor biosynthesis; adenosylcobalamin biosynthesis. Functionally, catalyzes amidations at positions B, D, E, and G on adenosylcobyrinic A,C-diamide. NH(2) groups are provided by glutamine, and one molecule of ATP is hydrogenolyzed for each amidation. This is Cobyric acid synthase from Clostridium botulinum (strain Langeland / NCTC 10281 / Type F).